A 528-amino-acid polypeptide reads, in one-letter code: Peptide chain release factor 3 (528 aa).

Residues 11–279 (NKRRTFAIIS…GIVEWAPKPL (269 aa)) form the tr-type G domain. GTP contacts are provided by residues 20 to 27 (SHPDAGKT), 88 to 92 (DTPGH), and 142 to 145 (NKLD).

It belongs to the TRAFAC class translation factor GTPase superfamily. Classic translation factor GTPase family. PrfC subfamily.

The protein localises to the cytoplasm. Its function is as follows. Increases the formation of ribosomal termination complexes and stimulates activities of RF-1 and RF-2. It binds guanine nucleotides and has strong preference for UGA stop codons. It may interact directly with the ribosome. The stimulation of RF-1 and RF-2 is significantly reduced by GTP and GDP, but not by GMP. This is Peptide chain release factor 3 from Shewanella sp. (strain W3-18-1).